We begin with the raw amino-acid sequence, 423 residues long: G2/mitotic-specific cyclin-B1 (423 aa).

S116 bears the Phosphoserine; by CDK1 mark. Phosphoserine is present on S118. At S123 the chain carries Phosphoserine; by PLK1. S137 bears the Phosphoserine mark. 2 interaction with CDK2 regions span residues 159 to 167 and 248 to 251; these read EYVKDIYAY and YEEM. Residue T311 is modified to Phosphothreonine.

Belongs to the cyclin family. Cyclin AB subfamily. In terms of assembly, interacts with the CDC2 protein kinase to form a serine/threonine kinase holoenzyme complex also known as maturation promoting factor (MPF). The cyclin subunit imparts substrate specificity to the complex. Binds HEI10. Interacts with catalytically active RALBP1 and CDC2 during mitosis to form an endocytotic complex during interphase. Interacts with CCNF; interaction is required for nuclear localization. Interacts with CDK5RAP3. Interacts with RFPL4A and UBE2A. Interacts with INCA1. Ubiquitinated by the SCF(NIPA) complex during interphase, leading to its destruction. Deubiquitinated by USP22 during G2/M phase. In terms of processing, phosphorylated by PLK1 at Ser-123 on centrosomes during prophase: phosphorylation by PLK1 does not cause nuclear import. Phosphorylation at Ser-137 was also reported to be mediated by PLK1 but Ser-123 seems to be the primary phosphorylation site.

The protein localises to the cytoplasm. It localises to the nucleus. The protein resides in the cytoskeleton. Its subcellular location is the microtubule organizing center. It is found in the centrosome. Its function is as follows. Essential for the control of the cell cycle at the G2/M (mitosis) transition. The chain is G2/mitotic-specific cyclin-B1 (Ccnb1) from Rattus norvegicus (Rat).